Here is a 60-residue protein sequence, read N- to C-terminus: Small ribosomal subunit protein bS21 (60 aa).

Residues 39–60 (ETPQEKRKRKAVARRRQRTRRR) are disordered. The segment covering 44 to 60 (KRKRKAVARRRQRTRRR) has biased composition (basic residues).

Belongs to the bacterial ribosomal protein bS21 family.

The chain is Small ribosomal subunit protein bS21 from Microcystis aeruginosa (strain NIES-843 / IAM M-2473).